The sequence spans 548 residues: Isocitrate dehydrogenase [NAD(+)] 1, mitochondrial (548 aa).

The transit peptide at 1–53 directs the protein to the mitochondrion; the sequence is MSSLSTLRILHSTAGRRWASYYGIYPKSAACSSSSVAIARFFSTAADRPPKHA. Residues 132–134 and Asn153 contribute to the NAD(+) site; that span reads TIT. D-threo-isocitrate contacts are provided by residues 151–157, Arg187, Tyr194, Lys266, Asp311, and Asp335; that span reads SPNGAMR. Residues Asp311, Asp335, and Asp339 each coordinate Mg(2+). Residues 372–377 and Asn391 contribute to the NAD(+) site; that span reads HGTVSD. The EF-hand domain occupies 499 to 534; it reads IDEEAINGLFQKYDKNGDGFIDFEEFTRMLVKMNLA. Residues Asp512, Asn514, Asp516, Phe518, and Glu523 each contribute to the Ca(2+) site.

It belongs to the isocitrate and isopropylmalate dehydrogenases family. In terms of assembly, homodimer. Mg(2+) is required as a cofactor. Mn(2+) serves as cofactor.

It localises to the mitochondrion. The enzyme catalyses D-threo-isocitrate + NAD(+) = 2-oxoglutarate + CO2 + NADH. The homodimer exhibits allosteric regulation by isocitrate. Activated by Mn(2+) and Mg(2+). No activation by Na(+), K(+) or Li(+). Inhibited by Co(2+), Cu(2+) and Ni(2+), but not with Ca(2+) in the presence of Mn(2+) or Mg(2+). Competitively inhibited by NADH, but no effect on activity by 1.0 mM citrate. Strongly inhibited by excess ATP, ADP, AMP and alpha-ketoglutarate. Performs an essential role in the oxidative function of the tricarboxylic acid cycle and respiration. Catalyzes the decarboxylation of isocitrate to produce 2-oxoglutarate and generate NADH to provide electrons for energy production. No activity with NADP(+). The chain is Isocitrate dehydrogenase [NAD(+)] 1, mitochondrial from Phaeodactylum tricornutum (strain CCAP 1055/1).